The primary structure comprises 160 residues: Cyclic pyranopterin monophosphate synthase (160 aa).

Substrate contacts are provided by residues 74–76 (LSH) and 112–113 (ME). Residue Asp127 is part of the active site.

The protein belongs to the MoaC family. Homohexamer; trimer of dimers.

The enzyme catalyses (8S)-3',8-cyclo-7,8-dihydroguanosine 5'-triphosphate = cyclic pyranopterin phosphate + diphosphate. It functions in the pathway cofactor biosynthesis; molybdopterin biosynthesis. Functionally, catalyzes the conversion of (8S)-3',8-cyclo-7,8-dihydroguanosine 5'-triphosphate to cyclic pyranopterin monophosphate (cPMP). This is Cyclic pyranopterin monophosphate synthase from Geobacter metallireducens (strain ATCC 53774 / DSM 7210 / GS-15).